Reading from the N-terminus, the 87-residue chain is U3-theraphotoxin-Hhn1l (87 aa).

The first 24 residues, 1-24 (MVNMKASMFLTFAGLVLLFVVCYA), serve as a signal peptide directing secretion. A propeptide spanning residues 25-52 (SESEEKEFPKEMLSSIFAVDNDFKQEER) is cleaved from the precursor. 3 cysteine pairs are disulfide-bonded: Cys54/Cys67, Cys61/Cys72, and Cys66/Cys79.

Belongs to the neurotoxin 10 (Hwtx-1) family. 51 (Hntx-8) subfamily. Hntx-8 sub-subfamily. As to expression, expressed by the venom gland.

The protein localises to the secreted. In terms of biological role, ion channel inhibitor. The sequence is that of U3-theraphotoxin-Hhn1l from Cyriopagopus hainanus (Chinese bird spider).